Reading from the N-terminus, the 256-residue chain is Hemolymph lipopolysaccharide-binding protein (256 aa).

Residues 1–21 (MMNTRALLPLSVLLMATLCLC) form the signal peptide. A propeptide spanning residues 22 to 33 (ELPIPILQRFVR) is cleaved from the precursor. Residue N56 is glycosylated (N-linked (GlcNAc...) asparagine). Positions 146-256 (IICQQEGGHL…KLPFVCEVEL (111 aa)) constitute a C-type lectin domain. Disulfide bonds link C148–C252 and C230–C244.

In terms of tissue distribution, hemolymph.

The protein resides in the secreted. Participates probably in the elimination of foreign substances invading the insect abdominal cavity, and in trapping intracellular symbionts, when they leak from the mycetomes into the hemolymph. This chain is Hemolymph lipopolysaccharide-binding protein, found in Periplaneta americana (American cockroach).